We begin with the raw amino-acid sequence, 327 residues long: Auxin-responsive protein IAA18 (327 aa).

Disordered regions lie at residues 26-45 (VKEADGEGSRNTNLDADEDK), 52-98 (GLPG…IGTT), and 180-202 (NLTNGSSFKQSPERQNDEADDKA). Positions 49-53 (LKLGL) match the EAR-like (transcriptional repression) motif. The segment covering 58 to 69 (QEERAADSREKI) has biased composition (basic and acidic residues). Low complexity predominate over residues 70–82 (QQQQRESSSEPSI). Positions 180–189 (NLTNGSSFKQ) are enriched in polar residues. Over residues 190–202 (SPERQNDEADDKA) the composition is skewed to basic and acidic residues. In terms of domain architecture, PB1 spans 209–313 (RPLVKINMDG…TVKRLRVMRR (105 aa)).

The protein belongs to the Aux/IAA family. Homodimers and heterodimers. In terms of tissue distribution, highly expressed in flowers. Expressed in roots and etiolated seedlings.

The protein resides in the nucleus. Functionally, aux/IAA proteins are short-lived transcriptional factors that function as repressors of early auxin response genes at low auxin concentrations. The chain is Auxin-responsive protein IAA18 (IAA18) from Oryza sativa subsp. japonica (Rice).